A 728-amino-acid chain; its full sequence is Catalase-peroxidase 1 (728 aa).

The segment at residues 91–218 (WHSAGTYRTA…LAAVQMGLIY (128 aa)) is a cross-link (tryptophyl-tyrosyl-methioninium (Trp-Tyr) (with M-244)). The active-site Proton acceptor is the H92. The segment at residues 218–244 (YVNPEGPDGNPDPVAAARDIRDTFARM) is a cross-link (tryptophyl-tyrosyl-methioninium (Tyr-Met) (with W-91)). Heme b is bound at residue H259.

Belongs to the peroxidase family. Peroxidase/catalase subfamily. In terms of assembly, homodimer or homotetramer. Requires heme b as cofactor. Post-translationally, formation of the three residue Trp-Tyr-Met cross-link is important for the catalase, but not the peroxidase activity of the enzyme.

The catalysed reaction is H2O2 + AH2 = A + 2 H2O. It carries out the reaction 2 H2O2 = O2 + 2 H2O. Its function is as follows. Bifunctional enzyme with both catalase and broad-spectrum peroxidase activity. The polypeptide is Catalase-peroxidase 1 (Burkholderia ambifaria (strain MC40-6)).